We begin with the raw amino-acid sequence, 109 residues long: Nucleoid-associated protein YbaB (109 aa).

This sequence belongs to the YbaB/EbfC family. In terms of assembly, homodimer.

Its subcellular location is the cytoplasm. The protein localises to the nucleoid. Binds to DNA and alters its conformation. May be involved in regulation of gene expression, nucleoid organization and DNA protection. This is Nucleoid-associated protein YbaB from Escherichia coli O8 (strain IAI1).